A 503-amino-acid polypeptide reads, in one-letter code: ATP synthase subunit alpha, chloroplastic (503 aa).

170–177 serves as a coordination point for ATP; it reads GDRQTGKT.

The protein belongs to the ATPase alpha/beta chains family. F-type ATPases have 2 components, CF(1) - the catalytic core - and CF(0) - the membrane proton channel. CF(1) has five subunits: alpha(3), beta(3), gamma(1), delta(1), epsilon(1). CF(0) has four main subunits: a, b, b' and c.

It localises to the plastid. It is found in the chloroplast thylakoid membrane. The enzyme catalyses ATP + H2O + 4 H(+)(in) = ADP + phosphate + 5 H(+)(out). In terms of biological role, produces ATP from ADP in the presence of a proton gradient across the membrane. The alpha chain is a regulatory subunit. The chain is ATP synthase subunit alpha, chloroplastic from Trieres chinensis (Marine centric diatom).